A 185-amino-acid polypeptide reads, in one-letter code: MLKAKILFVGPCESGKTVLANFLTESSDITEYSPTQGVRILEFENPHVTSNNKGTGCEFELWDCGGDAKFESCWPALMKDAHGVVIVFNADIPSHRKEMEMWYSCFVQQPSLQDTQCMLIAHHKPGSGDDKGSLSLSPPLNKLKLVHSNLEDDPEEIRMEFIKYLKSIINSMSESRDREEMSIMT.

Residues 10–17 (GPCESGKT), 63–67 (DCGGD), and 123–126 (HKPG) each bind GTP. Ser-137 bears the Phosphoserine mark.

It belongs to the small GTPase superfamily. Rab family. Component of the IFT complex B, at least composed of IFT20, IFT22, IFT25, IFT27, IFT46, IFT52, TRAF3IP1/IFT54, IFT57, IFT74, IFT80, IFT81, and IFT88. Interacts with IFT88. Interacts with CFAP61.

It localises to the cell projection. It is found in the cilium. Its function is as follows. Small GTPase-like component of the intraflagellar transport (IFT) complex B. In Homo sapiens (Human), this protein is Intraflagellar transport protein 22 homolog (IFT22).